The sequence spans 106 residues: Nucleoid-associated protein XAC1110 (106 aa).

The span at 80–89 (KIDAESKDRM) shows a compositional bias: basic and acidic residues. The interval 80–106 (KIDAESKDRMGSATAGMQLPPGMKLPF) is disordered.

It belongs to the YbaB/EbfC family. As to quaternary structure, homodimer.

Its subcellular location is the cytoplasm. It is found in the nucleoid. Binds to DNA and alters its conformation. May be involved in regulation of gene expression, nucleoid organization and DNA protection. This is Nucleoid-associated protein XAC1110 from Xanthomonas axonopodis pv. citri (strain 306).